The chain runs to 171 residues: UPF0316 protein Exig_2248 (171 aa).

3 helical membrane-spanning segments follow: residues 4-24 (ILLI…RTIM), 31-51 (IIAG…LGIV), and 57-77 (TVGM…GGFV).

The protein belongs to the UPF0316 family.

The protein resides in the cell membrane. The sequence is that of UPF0316 protein Exig_2248 from Exiguobacterium sibiricum (strain DSM 17290 / CCUG 55495 / CIP 109462 / JCM 13490 / 255-15).